The following is a 676-amino-acid chain: Electrogenic aspartate/glutamate antiporter SLC25A13, mitochondrial (676 aa).

Ala2 carries the post-translational modification N-acetylalanine. The interval 2-295 is regulatory N-terminal domain; the sequence is AAAKVALTKR…TLADIERIAP (294 aa). Topologically, residues 2–332 are mitochondrial intermembrane; sequence AAAKVALTKR…LLQLAESAYR (331 aa). Lys18 carries the post-translational modification N6-acetyllysine. 4 EF-hand domains span residues 51-86, 87-122, 123-157, and 158-193; these read SQPN…SVLC, APDA…TTIH, QHIP…FLLE, and IQLE…IRPH. Ca(2+) contacts are provided by Asp66, Thr68, Asp70, Leu72, and Glu77. The segment at 296 to 311 is linker loop domain; the sequence is LEEGMLPFNLAEAQRQ. The carrier domain stretch occupies residues 322 to 613; that stretch reads FLLQLAESAY…LQRWFYVDFG (292 aa). 3 Solcar repeats span residues 327–419, 427–511, and 519–607; these read AESA…VRDK, VPLL…VKAS, and VSPG…LQRW. A helical membrane pass occupies residues 333–350; the sequence is FGLGSIAGAVGATAVYPI. Topologically, residues 351 to 393 are mitochondrial matrix; that stretch reads DLVKTRMQNQRSTGSFVGELMYKNSFDCFKKVLRYEGFFGLYR. Residues Lys354 and Lys373 each carry the N6-acetyllysine modification. Residues 394–413 traverse the membrane as a helical segment; that stretch reads GLLPQLLGVAPEKAIKLTVN. The Mitochondrial intermembrane portion of the chain corresponds to 414–436; sequence DFVRDKFMHKDGSVPLLAEIFAG. A helical membrane pass occupies residues 437–450; the sequence is GCAGGSQVIFTNPL. The Mitochondrial matrix portion of the chain corresponds to 451-485; it reads EIVKIRLQVAGEITTGPRVSALSVVRDLGFFGIYK. Residue Lys454 is modified to N6-methyllysine. Lys485 is modified (N6-acetyllysine; alternate). Lys485 is modified (N6-succinyllysine; alternate). A helical transmembrane segment spans residues 486–505; sequence GAKACFLRDIPFSAIYFPCY. Topologically, residues 506–524 are mitochondrial intermembrane; sequence AHVKASFANEDGQVSPGSL. Residues 525–542 form a helical membrane-spanning segment; sequence LLAGAIAGMPAASLVTPA. Residues 543–581 lie on the Mitochondrial matrix side of the membrane; sequence DVIKTRLQVAARAGQTTYNGVTDCFRKILREEGPKALWK. N6-succinyllysine is present on Lys581. Residues 582-601 traverse the membrane as a helical segment; sequence GVAARVFRSSPQFGVTLLTY. Topologically, residues 602–676 are mitochondrial intermembrane; sequence ELLQRWFYVD…STSKVTAGDS (75 aa). A C-terminal domain region spans residues 614 to 676; that stretch reads GVKPVGSEPV…STSKVTAGDS (63 aa). Residue Lys663 is modified to N6-acetyllysine. Ser667 is subject to Phosphoserine.

This sequence belongs to the mitochondrial carrier (TC 2.A.29) family. Homodimer (via N-terminus). At 10.5 dpc, expressed in branchial arches, a well as in the limb and tail buds. At 13.5 dpc expression is predominant in epithelial structures and the forebrain, kidney and liver. Expression in liver is maintained into adulthood.

The protein localises to the mitochondrion inner membrane. It catalyses the reaction L-aspartate(in) + L-glutamate(out) + H(+)(out) = L-aspartate(out) + L-glutamate(in) + H(+)(in). The enzyme catalyses 3-sulfino-L-alanine(out) + L-glutamate(in) + H(+)(in) = 3-sulfino-L-alanine(in) + L-glutamate(out) + H(+)(out). It carries out the reaction 3-sulfino-L-alanine(out) + L-aspartate(in) = 3-sulfino-L-alanine(in) + L-aspartate(out). In terms of biological role, mitochondrial electrogenic aspartate/glutamate antiporter that favors efflux of aspartate and entry of glutamate and proton within the mitochondria as part of the malate-aspartate shuttle. Also mediates the uptake of L-cysteinesulfinate (3-sulfino-L-alanine) by mitochondria in exchange of L-glutamate and proton. Can also exchange L-cysteinesulfinate with aspartate in their anionic form without any proton translocation. Lacks transport activity towards gamma-aminobutyric acid (GABA). The chain is Electrogenic aspartate/glutamate antiporter SLC25A13, mitochondrial from Mus musculus (Mouse).